The sequence spans 687 residues: Polyphosphate kinase (687 aa).

Asn45 contributes to the ATP binding site. Positions 375 and 405 each coordinate Mg(2+). Residue His435 is the Phosphohistidine intermediate of the active site. ATP-binding residues include Tyr472, Arg568, and His596.

The protein belongs to the polyphosphate kinase 1 (PPK1) family. Mg(2+) serves as cofactor. In terms of processing, an intermediate of this reaction is the autophosphorylated ppk in which a phosphate is covalently linked to a histidine residue through a N-P bond.

The enzyme catalyses [phosphate](n) + ATP = [phosphate](n+1) + ADP. Functionally, catalyzes the reversible transfer of the terminal phosphate of ATP to form a long-chain polyphosphate (polyP). In Burkholderia ambifaria (strain ATCC BAA-244 / DSM 16087 / CCUG 44356 / LMG 19182 / AMMD) (Burkholderia cepacia (strain AMMD)), this protein is Polyphosphate kinase.